Consider the following 779-residue polypeptide: Transcription activator of gluconeogenesis BDCG_02812 (779 aa).

The tract at residues 1–70 (MTASTRNGSP…NAKDPLRPRR (70 aa)) is disordered. Over residues 25 to 61 (KSMTTTPANPPETKSQTNGKGSGTAQSSQKPASTSAN) the composition is skewed to polar residues. The segment at residues 77–105 (CFACQRAHLTCGDERPCQRCIKRGLQDAC) is a DNA-binding region (zn(2)-C6 fungal-type). 6 disordered regions span residues 135–163 (QANTTRNIPNQRGNASNSNSNKVSRQSVS), 202–239 (SVFHAQSPSSTQNFDLSSNPQTQNLSSAMSQTASSVSG), 285–344 (GAGD…ANPR), 401–421 (TNLMHPTNTPQQSRISTPGLK), 559–590 (GSSLSSASSVRGSSTFTPRNNNTHNSIDPHTG), and 655–732 (FHGK…QTWG). A compositionally biased stretch (polar residues) spans 202-226 (SVFHAQSPSSTQNFDLSSNPQTQNL). Residues 227–238 (SSAMSQTASSVS) are compositionally biased toward low complexity. Polar residues-rich tracts occupy residues 291-322 (PSDSATQRGSIGRSSGTFTAQNFGDSANNQSP), 333-344 (WNPTGQGQANPR), and 401-416 (TNLMHPTNTPQQSRIS). Residues 560–572 (SSLSSASSVRGSS) are compositionally biased toward low complexity. Residues 573–586 (TFTPRNNNTHNSID) are compositionally biased toward polar residues. Positions 672-719 (TGTTTSGDVATTTATGTSTSNGANANTNGNNTNPNDPSSAASSSASSA) are enriched in low complexity. Residues 720–729 (LQGPQQSPRQ) show a composition bias toward polar residues.

It belongs to the ERT1/acuK family.

The protein localises to the nucleus. In terms of biological role, transcription factor which regulates nonfermentable carbon utilization. Activator of gluconeogenetic genes. The chain is Transcription activator of gluconeogenesis BDCG_02812 from Ajellomyces dermatitidis (strain ER-3 / ATCC MYA-2586) (Blastomyces dermatitidis).